A 242-amino-acid chain; its full sequence is Terpene cyclase dpfgB (242 aa).

The next 7 helical transmembrane spans lie at 15-37, 51-71, 75-95, 112-132, 141-161, 169-189, and 205-225; these read DVAW…NYVG, ALMA…IYPF, LEMY…YTAV, LPLI…ALAA, AWSA…QLLC, SYFL…QDIL, and LYIW…ICLW.

Belongs to the paxB family.

The protein resides in the membrane. Its pathway is secondary metabolite biosynthesis; terpenoid biosynthesis. In terms of biological role, terpene cyclase; part of the gene cluster that mediates the biosynthesis of diterpenoid pyrones. The first step of the pathway is the synthesis of the alpha-pyrone moiety by the polyketide synthase dpfgA via condensation of one acetyl-CoA starter unit with 3 malonyl-CoA units and 2 methylations. The alpha-pyrone is then combined with geranylgeranyl pyrophosphate (GGPP) formed by the GGPP synthase dpfgD through the action of the prenyltransferase dpfgC to yield a linear alpha-pyrone diterpenoid. Subsequent steps in the diterpenoid pyrone biosynthetic pathway involve the decalin core formation, which is initiated by the epoxidation of the C10-C11 olefin by the FAD-dependent oxidoreductase dpfgE, and is followed by a cyclization cascade catalyzed by the terpene cyclase dpfgB. The short chain dehydrogenase/reductase dpfgG then oxidizes the 8S hydroxy group to a ketone and the short chain dehydrogenase/reductase dpfgH reduces the ketone to the 8R hydroxy group to yield higginsianin B. Higginsianin B is further methylated by the methyltransferase dpfgI to produce the intermediate named FDDP B. The cytochrome P450 monooxygenase dfgpJ then catalyzes a three-step oxidation at C-27 to generate a carboxylic acid as well as C-26 hydroxylation. Finally, methyltransferase dpfgK methylates the carboxylic acid generated by dpfgJ, yielding the final diterpenoid pyrones from the pathway which were named FDDP D and FDDP E. The polypeptide is Terpene cyclase dpfgB (Gibberella zeae (strain ATCC MYA-4620 / CBS 123657 / FGSC 9075 / NRRL 31084 / PH-1) (Wheat head blight fungus)).